The following is a 1228-amino-acid chain: DNA-directed RNA polymerase subunit beta (1228 aa).

It belongs to the RNA polymerase beta chain family. As to quaternary structure, the RNAP catalytic core consists of 2 alpha, 1 beta, 1 beta' and 1 omega subunit. When a sigma factor is associated with the core the holoenzyme is formed, which can initiate transcription.

It carries out the reaction RNA(n) + a ribonucleoside 5'-triphosphate = RNA(n+1) + diphosphate. DNA-dependent RNA polymerase catalyzes the transcription of DNA into RNA using the four ribonucleoside triphosphates as substrates. The protein is DNA-directed RNA polymerase subunit beta of Leptospira biflexa serovar Patoc (strain Patoc 1 / Ames).